The sequence spans 275 residues: Large ribosomal subunit protein uL2c (275 aa).

Positions 219–267 are disordered; the sequence is TVRGSVMNPCDHPHGGGEGRTPIGRTRPLTPWGKPALGKKTRKTKKLSS. A compositionally biased stretch (basic residues) spans 255–264; that stretch reads LGKKTRKTKK.

This sequence belongs to the universal ribosomal protein uL2 family. As to quaternary structure, part of the 50S ribosomal subunit.

It localises to the plastid. The protein resides in the chloroplast. This chain is Large ribosomal subunit protein uL2c (rpl2), found in Thalassiosira pseudonana (Marine diatom).